Consider the following 473-residue polypeptide: GDP-fucose protein O-fucosyltransferase 2 (473 aa).

The first 25 residues, 1–25 (MKNMIYNLISISLYSLIIILTDIYA), serve as a signal peptide directing secretion. GDP-beta-L-fucose is bound by residues 59 to 63 (GEGFN), 283 to 285 (HLR), and 379 to 380 (RF). The Proton acceptor role is filled by E60.

The protein belongs to the glycosyltransferase 68 family.

Its subcellular location is the endoplasmic reticulum. The enzyme catalyses L-seryl-[protein] + GDP-beta-L-fucose = 3-O-(alpha-L-fucosyl)-L-seryl-[protein] + GDP + H(+). The catalysed reaction is L-threonyl-[protein] + GDP-beta-L-fucose = 3-O-(alpha-L-fucosyl)-L-threonyl-[protein] + GDP + H(+). Its pathway is protein modification; protein glycosylation. Functionally, catalyzes the reaction that attaches fucose through an O-glycosidic linkage to a conserved serine or threonine residue in the consensus sequence C1-X-X-S/T-C2 of thrombospondin type I repeats (TSRs) where C1 and C2 are the first and second cysteines of the repeat, respectively. O-fucosylates sporozoite proteins CSP and TRAP. O-fucosylation regulates stability and intracellular trafficking of TRAP but not of CSP. Dispensable for parasite transmission to the mosquito vector and/or infection of the vertebrate host hepatocytes. This Plasmodium berghei (strain Anka) protein is GDP-fucose protein O-fucosyltransferase 2.